A 649-amino-acid polypeptide reads, in one-letter code: WEB family protein At5g55860 (649 aa).

Coiled-coil stretches lie at residues 59–227 (EKVL…ACSQ), 267–356 (EFAK…IESV), and 391–461 (TINQ…MSEK). Over residues 443–453 (EAKAAETKALE) the composition is skewed to basic and acidic residues. The disordered stretch occupies residues 443–483 (EAKAAETKALEQIKSMSEKTNAARNSTSSESGSQSITLSQE). Polar residues predominate over residues 456–467 (KSMSEKTNAARN). The span at 468–482 (STSSESGSQSITLSQ) shows a compositional bias: low complexity. Positions 505-549 (AALAQVEAVRASENETLKKLETTQEEIKKLKTATEEALKKAAMAD) form a coiled coil. The segment at 583-611 (MKMASESSPQQHYKAPKQKPVNNKLEKTK) is disordered.

It belongs to the WEB family.

In Arabidopsis thaliana (Mouse-ear cress), this protein is WEB family protein At5g55860.